Reading from the N-terminus, the 413-residue chain is F-box protein CPR1 (413 aa).

An F-box domain is found at 1–48 (MATIPMDIVNDIFLRLPAKTLVRCRALSKPCYHLINDPDFIESHLHRV).

In terms of assembly, part of a SCF (ASK-cullin-F-box) protein ligase complex. Interacts with SKP1A/ASK1, SPK1B/ASK2, ASK9, ASK10, ASK11, ASK13, ASK14, ASK16, ASK17, ASK18 and ASK19. Interacts with TRAF1B. Expressed in seedling, root, stem, leaves, inflorescence and silique, especially in veins and trichomes.

Its subcellular location is the cytoplasm. The protein resides in the nucleus. The protein operates within protein modification; protein ubiquitination. In terms of biological role, component of SCF(ASK-cullin-F-box) E3 ubiquitin ligase complexes, which may mediate the ubiquitination and subsequent proteasomal degradation of target proteins. Regulates negatively both salicylic acid (SA)-dependent and SA-independent defense signaling. In Arabidopsis thaliana (Mouse-ear cress), this protein is F-box protein CPR1 (CPR1).